Consider the following 160-residue polypeptide: SKP1-like protein 1A (160 aa).

Positions 102 to 160 are interaction with the F-box domain of F-box proteins; that stretch reads ILAANYLNIKNLLDLTCQTVADMIKGKTPEEIRTTFNIKNDFTPEEEEEVRRENQWAFE.

It belongs to the SKP1 family. In terms of assembly, part of a SCF E3 ubiquitin ligase complex composed of SKP1, CUL1, RBX1 (RBX1A or RBX1B) and F-box proteins. Interacts with SKIP1, SKIP2, SKIP3, SKIP4, SKIP6, FIB1/SKIP7, SKIP8, PP2A11/SKIP10, SKIP11, PP2B11/SKIP12, PP2A14/SKIP13, SKIP14, SKIP15, SKIP16, SKIP19/FBL20, SKIP20, PP2B1/SKIP21, SKIP22, SKIP23, SKIP24, SKIP25, TULP10/SKIP26, SKIP27, SKIP28/MEE11, AFR/SKIP29, SKIP30, SKIP31, SKIP32/FBP7, SKIP33, SKIP35, ADO1/ZTL, ADO2/LKP2, ADO3/FKF1, AFR, COI1, DOR, EBF1, EBF2, EID1, ORE9, PP2A13/SKIP9, TIR1, UFO, SKP2A, CPR1/CPR30, FBL17, NUP58, At1g55000, At1g67340, At1g78100, At3g04660, At3g61590, At4g38940 and At5g49610. The SKP1A subunit of the SCF E3 ubiquitin ligase complex can interact directly with KIN10, KIN11 and the proteasome subunit PAD1. This interaction can be disrupted by PRL1. In case of polerovirus infection, part of a SCF P0 complex composed of the viral silencing suppressor P0, SKP1 and CUL1. Interacts with turnip yellows virus P0. Interacts with VBF and Agrobacterium virF. Binds to KIB1. Accumulates only in meristematic cells. Expressed in inflorescence, shoot and root apical meristems, as well as in developing organs such as gametocytes and seeds. Also detected in cortical layer and epidermis of roots, leaves, pith and vascular bundle of young stem, young floral buds and organ primordia, pollen and through the valve of siliques. Not detectable in mature root tissues.

The protein localises to the nucleus. Its subcellular location is the cytoplasm. It is found in the cytoskeleton. It localises to the spindle. The protein resides in the phragmoplast. Its pathway is protein modification; protein ubiquitination. Involved in ubiquitination and subsequent proteasomal degradation of target proteins. Together with CUL1, RBX1 and a F-box protein, it forms a SCF E3 ubiquitin ligase complex. The functional specificity of this complex depends on the type of F-box protein. In the SCF complex, it serves as an adapter that links the F-box protein to CUL1. SCF(UFO) is required for vegetative and floral organ development as well as for male gametogenesis. SCF(TIR1) is involved in auxin signaling pathway. SCF(COI1) regulates responses to jasmonates. SCF(EID1) and SCF(AFR) are implicated in phytochrome A light signaling. SCF(ADO1), SCF(ADO2), SCF(ADO3) are related to the circadian clock. SCF(ORE9) seems to be involved in senescence. SCF(EBF1/EBF2) may regulate ethylene signaling. Plays a role during embryogenesis and early postembryonic development, especially during cell elongation and division. Contributes to the correct chromosome segregation during tetrad formation. The polypeptide is SKP1-like protein 1A (Arabidopsis thaliana (Mouse-ear cress)).